A 145-amino-acid polypeptide reads, in one-letter code: Bacilliredoxin SAR1592 (145 aa).

The protein belongs to the bacilliredoxin family.

The protein is Bacilliredoxin SAR1592 of Staphylococcus aureus (strain MRSA252).